A 561-amino-acid chain; its full sequence is Arginine--tRNA ligase (561 aa).

A 'HIGH' region motif is present at residues 129–139 (ANPTGPLHVGH).

This sequence belongs to the class-I aminoacyl-tRNA synthetase family. As to quaternary structure, monomer.

The protein resides in the cytoplasm. It carries out the reaction tRNA(Arg) + L-arginine + ATP = L-arginyl-tRNA(Arg) + AMP + diphosphate. The sequence is that of Arginine--tRNA ligase from Bordetella parapertussis (strain 12822 / ATCC BAA-587 / NCTC 13253).